Here is a 603-residue protein sequence, read N- to C-terminus: uncharacterized protein (603 aa).

The tract at residues 257–281 (AGEAASSDHDQKISRVTRKRPREPK) is disordered.

This is an uncharacterized protein from Saccharomyces cerevisiae (strain ATCC 204508 / S288c) (Baker's yeast).